We begin with the raw amino-acid sequence, 217 residues long: uncharacterized protein (217 aa).

Helical transmembrane passes span 151 to 171 (LIPFINFFLLYHQIILSHSLF) and 177 to 197 (ISFHFLFFSFLSFPLLSFILF).

The protein resides in the mitochondrion membrane. This is an uncharacterized protein from Schizosaccharomyces pombe (strain 972 / ATCC 24843) (Fission yeast).